We begin with the raw amino-acid sequence, 208 residues long: Coiled-coil domain-containing protein 25 (208 aa).

Topologically, residues 1 to 105 (MVFYFTSSSV…SNLKKTADMD (105 aa)) are extracellular. The segment at 21–25 (KDKYE) is DNA-binding. Position 23 is an N6-acetyllysine (lysine 23). The chain crosses the membrane as a helical span at residues 106–122 (VGQIGFHRQKDVKIVTV). Residues 117–187 (VKIVTVEKKV…REMDELRSYS (71 aa)) are a coiled coil. Over 123–208 (EKKVNEILNR…QDGNDSDEFM (86 aa)) the chain is Cytoplasmic. Residues 144–184 (LAAEKEGRDREERNEKKAQIQEMKRKEKEEMKKKREMDELR) show a composition bias toward basic and acidic residues. The tract at residues 144–208 (LAAEKEGRDR…QDGNDSDEFM (65 aa)) is disordered. Serine 204 carries the phosphoserine modification.

The protein belongs to the CCDC25 family. Interacts (via cytoplasmic region) with ILK.

It localises to the cell membrane. The protein resides in the endomembrane system. Its function is as follows. Transmembrane receptor that senses neutrophil extracellular traps (NETs) and triggers the ILK-PARVB pathway to enhance cell motility. NETs are mainly composed of DNA fibers and are released by neutrophils to bind pathogens during inflammation. Formation of NETs is also associated with cancer metastasis, NET-DNA acting as a chemotactic factor to attract cancer cells. Specifically binds NETs on its extracellular region, in particular the 8-OHdG-enriched DNA present in NETs, and recruits ILK, initiating the ILK-PARVB cascade to induce cytoskeleton rearrangement and directional migration of cells. In the context of cancer, promotes cancer metastasis by sensing NETs and promoting migration of tumor cells. This is Coiled-coil domain-containing protein 25 from Mus musculus (Mouse).